The chain runs to 750 residues: Photosystem I P700 chlorophyll a apoprotein A1 (750 aa).

8 consecutive transmembrane segments (helical) span residues Val70–Ala93, Leu156–His179, Leu195–Leu219, Ile291–Tyr309, Trp346–Tyr369, Leu385–Val411, Ala433–His455, and Phe531–Leu549. Cys573 and Cys582 together coordinate [4Fe-4S] cluster. A run of 2 helical transmembrane segments spans residues His589–Trp610 and Leu664–Phe686. His675 provides a ligand contact to chlorophyll a'. Chlorophyll a is bound by residues Met683 and Tyr691. Trp692 contributes to the phylloquinone binding site. A helical membrane pass occupies residues Ala724–Ala744.

It belongs to the PsaA/PsaB family. In terms of assembly, the PsaA/B heterodimer binds the P700 chlorophyll special pair and subsequent electron acceptors. PSI consists of a core antenna complex that captures photons, and an electron transfer chain that converts photonic excitation into a charge separation. The eukaryotic PSI reaction center is composed of at least 11 subunits. P700 is a chlorophyll a/chlorophyll a' dimer, A0 is one or more chlorophyll a, A1 is one or both phylloquinones and FX is a shared 4Fe-4S iron-sulfur center. serves as cofactor.

The protein resides in the plastid. The protein localises to the chloroplast thylakoid membrane. The enzyme catalyses reduced [plastocyanin] + hnu + oxidized [2Fe-2S]-[ferredoxin] = oxidized [plastocyanin] + reduced [2Fe-2S]-[ferredoxin]. Its function is as follows. PsaA and PsaB bind P700, the primary electron donor of photosystem I (PSI), as well as the electron acceptors A0, A1 and FX. PSI is a plastocyanin-ferredoxin oxidoreductase, converting photonic excitation into a charge separation, which transfers an electron from the donor P700 chlorophyll pair to the spectroscopically characterized acceptors A0, A1, FX, FA and FB in turn. Oxidized P700 is reduced on the lumenal side of the thylakoid membrane by plastocyanin. This chain is Photosystem I P700 chlorophyll a apoprotein A1, found in Draba nemorosa (Woodland whitlowgrass).